Here is a 564-residue protein sequence, read N- to C-terminus: NAD-dependent malic enzyme (564 aa).

The Proton donor role is filled by Tyr104. Arg157 is an NAD(+) binding site. Catalysis depends on Lys175, which acts as the Proton acceptor. The a divalent metal cation site is built by Glu246, Asp247, and Asp270. NAD(+) contacts are provided by Asp270 and Asn417.

It belongs to the malic enzymes family. As to quaternary structure, homotetramer. The cofactor is Mg(2+). Requires Mn(2+) as cofactor.

The catalysed reaction is (S)-malate + NAD(+) = pyruvate + CO2 + NADH. It carries out the reaction oxaloacetate + H(+) = pyruvate + CO2. The sequence is that of NAD-dependent malic enzyme from Aeromonas hydrophila subsp. hydrophila (strain ATCC 7966 / DSM 30187 / BCRC 13018 / CCUG 14551 / JCM 1027 / KCTC 2358 / NCIMB 9240 / NCTC 8049).